We begin with the raw amino-acid sequence, 357 residues long: Peptide chain release factor 1 (357 aa).

At Gln236 the chain carries N5-methylglutamine.

This sequence belongs to the prokaryotic/mitochondrial release factor family. Methylated by PrmC. Methylation increases the termination efficiency of RF1.

It localises to the cytoplasm. In terms of biological role, peptide chain release factor 1 directs the termination of translation in response to the peptide chain termination codons UAG and UAA. In Mycolicibacterium paratuberculosis (strain ATCC BAA-968 / K-10) (Mycobacterium paratuberculosis), this protein is Peptide chain release factor 1.